A 186-amino-acid polypeptide reads, in one-letter code: Ribosome-recycling factor (186 aa).

Belongs to the RRF family.

It is found in the cytoplasm. Functionally, responsible for the release of ribosomes from messenger RNA at the termination of protein biosynthesis. May increase the efficiency of translation by recycling ribosomes from one round of translation to another. The polypeptide is Ribosome-recycling factor (Polaromonas sp. (strain JS666 / ATCC BAA-500)).